A 20-amino-acid chain; its full sequence is Luminal-binding protein (20 aa).

It belongs to the heat shock protein 70 family.

It localises to the endoplasmic reticulum lumen. Functionally, probably plays a role in facilitating the assembly of multimeric protein complexes inside the ER. The sequence is that of Luminal-binding protein from Phaseolus vulgaris (Kidney bean).